The primary structure comprises 93 residues: Vacuolar ATPase assembly integral membrane protein VMA21 (93 aa).

Residues 1 to 21 (MSNRVSTGKMAMAPQESVQPA) are Cytoplasmic-facing. The chain crosses the membrane as a helical span at residues 22–42 (VLYKLVLFALLMAVVPIGTYF). Residues 43–54 (STLNYLWDGSTT) lie on the Lumenal side of the membrane. A helical membrane pass occupies residues 55–75 (FAAISAIAAANLILVGYVVVA). Over 76–93 (FREDAASRTGPLPEKKTS) the chain is Cytoplasmic. Residues 90-93 (KKTS) carry the Prevents secretion from ER motif.

The protein belongs to the VMA21 family.

It is found in the endoplasmic reticulum membrane. The protein localises to the endoplasmic reticulum-Golgi intermediate compartment membrane. Its subcellular location is the cytoplasmic vesicle. It localises to the COPII-coated vesicle membrane. In terms of biological role, required for the assembly of the V0 complex of the vacuolar ATPase (V-ATPase) in the endoplasmic reticulum. The sequence is that of Vacuolar ATPase assembly integral membrane protein VMA21 from Cryptococcus neoformans var. neoformans serotype D (strain JEC21 / ATCC MYA-565) (Filobasidiella neoformans).